We begin with the raw amino-acid sequence, 370 residues long: Cyclic dehypoxanthine futalosine synthase (370 aa).

One can recognise a Radical SAM core domain in the interval 50–295 (TTFVIGRNVN…QSSWVTMGPE (246 aa)). [4Fe-4S] cluster is bound by residues cysteine 64, cysteine 68, and cysteine 71.

The protein belongs to the radical SAM superfamily. MqnC family. Requires [4Fe-4S] cluster as cofactor.

It carries out the reaction dehypoxanthine futalosine + S-adenosyl-L-methionine = cyclic dehypoxanthinylfutalosinate + 5'-deoxyadenosine + L-methionine + H(+). It participates in quinol/quinone metabolism; menaquinone biosynthesis. Radical SAM enzyme that catalyzes the cyclization of dehypoxanthine futalosine (DHFL) into cyclic dehypoxanthine futalosine (CDHFL), a step in the biosynthesis of menaquinone (MK, vitamin K2). This is Cyclic dehypoxanthine futalosine synthase from Halalkalibacterium halodurans (strain ATCC BAA-125 / DSM 18197 / FERM 7344 / JCM 9153 / C-125) (Bacillus halodurans).